Reading from the N-terminus, the 198-residue chain is MSDAWLVVGLGNPGAEYERTRHNVGQMVLDELASRTRGSFKRHRTGARTAEVRLGVAPGGAPGPRVVLAAPTSYMNVSGGPVAGLAKYFDVDVEHLVVVHDELDVPFGSVRLKRGGGEGGHNGLRSISKSLGDKDYARVRVGIGRPPGRQDPADFVLKEFSSTEKKDMPFLVMDAADAVEELVIKGFEAAQQKFHAPA.

Position 17 (Tyr17) interacts with tRNA. Catalysis depends on His22, which acts as the Proton acceptor. TRNA-binding residues include Tyr74, Asn76, and Asn122.

Belongs to the PTH family. In terms of assembly, monomer.

The protein localises to the cytoplasm. The catalysed reaction is an N-acyl-L-alpha-aminoacyl-tRNA + H2O = an N-acyl-L-amino acid + a tRNA + H(+). Functionally, hydrolyzes ribosome-free peptidyl-tRNAs (with 1 or more amino acids incorporated), which drop off the ribosome during protein synthesis, or as a result of ribosome stalling. In terms of biological role, catalyzes the release of premature peptidyl moieties from peptidyl-tRNA molecules trapped in stalled 50S ribosomal subunits, and thus maintains levels of free tRNAs and 50S ribosomes. The protein is Peptidyl-tRNA hydrolase of Kineococcus radiotolerans (strain ATCC BAA-149 / DSM 14245 / SRS30216).